A 610-amino-acid chain; its full sequence is Zinc metalloproteinase-disintegrin-like acurhagin (610 aa).

A signal peptide spans 1–20 (MIQVLLVTICLAAFPYQGSS). Residues 21 to 191 (IILESGDVND…ISQLNLIPEQ (171 aa)) constitute a propeptide that is removed on maturation. A Pyrrolidone carboxylic acid modification is found at Q192. The Peptidase M12B domain occupies 198 to 394 (KYVETVVVVD…HNPECIDNEP (197 aa)). Ca(2+)-binding residues include E201 and D285. Intrachain disulfides connect C309–C389, C349–C373, and C351–C356. H334 lines the Zn(2+) pocket. Residue E335 is part of the active site. The Zn(2+) site is built by H338 and H344. N-linked (GlcNAc...) asparagine glycosylation occurs at N372. Ca(2+) contacts are provided by C389, N392, N407, L409, E411, E414, and D417. One can recognise a Disintegrin domain in the interval 402–488 (PPLCGNELLE…ECPADVFHKN (87 aa)). Disulfide bonds link C405-C434, C416-C429, C418-C424, C428-C451, C442-C448, C447-C473, C460-C480, C467-C499, C492-C504, C511-C561, C526-C572, C539-C549, C556-C598, and C592-C603. Residues 466 to 468 (ECD) carry the D/ECD-tripeptide motif. Positions 468, 469, 471, 483, and 484 each coordinate Ca(2+).

Belongs to the venom metalloproteinase (M12B) family. P-III subfamily. P-IIIa sub-subfamily. In terms of assembly, monomer. The cofactor is Zn(2+). N-glycosylated. Expressed by the venom gland.

It localises to the secreted. With respect to regulation, the proteinase activity is slightly enhanced by Ca(2+) and Mg(2+), but is completely inhibited by Zn(2+). Is completely inhibited by phenanthroline and EDTA. Not inhibited by PMSF. Snake venom zinc metalloprotease that causes hemorrhage and dose-dependently inhibits platelet aggregation triggered by collagen. This inhibition is due to its binding to glycoprotein VI (GP6) and collagen. The binding to GP6 results in inhibition of the signaling pathway (decrease of tyrosine phosphorylation of signaling proteins such as Syk, LAT, PI3-K and PLCgamma2). Preferentially cleaves alpha chain (FGA) of fibrinogen, followed by beta chain (FGB). Also degrades the extracellular matrix protein fibronectin (FN1), and cleaves collagen and von Willebrand factor (VWF). This chain is Zinc metalloproteinase-disintegrin-like acurhagin, found in Deinagkistrodon acutus (Hundred-pace snake).